We begin with the raw amino-acid sequence, 469 residues long: Probable Xaa-Pro aminopeptidase PEPP (469 aa).

Residues Asp-257, Asp-268, Glu-391, and Glu-436 each coordinate Mn(2+).

This sequence belongs to the peptidase M24B family. Mn(2+) serves as cofactor.

It carries out the reaction Release of any N-terminal amino acid, including proline, that is linked to proline, even from a dipeptide or tripeptide.. Its function is as follows. Catalyzes the removal of a penultimate prolyl residue from the N-termini of peptides. In Fusarium vanettenii (strain ATCC MYA-4622 / CBS 123669 / FGSC 9596 / NRRL 45880 / 77-13-4) (Fusarium solani subsp. pisi), this protein is Probable Xaa-Pro aminopeptidase PEPP (PEPP).